The following is a 63-amino-acid chain: Adipokinetic prohormone type 1 (63 aa).

An N-terminal signal peptide occupies residues 1–22 (MVQRCLVVALLVVVVAAALCSA). Position 23 is a pyrrolidone carboxylic acid (glutamine 23). Threonine 32 is subject to Threonine amide.

It belongs to the AKH/HRTH/RPCH family. Adipokinetic hormone precursor-related peptide (APRP) can form three type of disulfide-bond dimers: p1 (alpha-alpha), p2 (alpha-beta), and p3 (beta-beta).

The protein resides in the secreted. In terms of biological role, this hormone, released from cells in the corpora cardiaca, causes release of diglycerides from the fat body and stimulation of muscles to use these diglycerides as an energy source during energy-demanding processes. This is Adipokinetic prohormone type 1 from Schistocerca nitens (Vagrant locust).